We begin with the raw amino-acid sequence, 339 residues long: DNA-directed RNA polymerase subunit alpha (339 aa).

An alpha N-terminal domain (alpha-NTD) region spans residues 1–233 (MVREEVAGST…DLFLPFLHAE (233 aa)). Positions 264 to 339 (KKGIPLNSIF…IDLLKNKLSF (76 aa)) are alpha C-terminal domain (alpha-CTD).

Belongs to the RNA polymerase alpha chain family. In terms of assembly, in plastids the minimal PEP RNA polymerase catalytic core is composed of four subunits: alpha, beta, beta', and beta''. When a (nuclear-encoded) sigma factor is associated with the core the holoenzyme is formed, which can initiate transcription.

It is found in the plastid. Its subcellular location is the chloroplast. It carries out the reaction RNA(n) + a ribonucleoside 5'-triphosphate = RNA(n+1) + diphosphate. Functionally, DNA-dependent RNA polymerase catalyzes the transcription of DNA into RNA using the four ribonucleoside triphosphates as substrates. This Aegilops tauschii (Tausch's goatgrass) protein is DNA-directed RNA polymerase subunit alpha.